We begin with the raw amino-acid sequence, 494 residues long: Alpha-amylase 2 (494 aa).

Positions 1 to 18 (MFLAKSIVCLALLAVANA) are cleaved as a signal peptide. A disulfide bridge links Cys46 with Cys102. The Ca(2+) site is built by Asn116, Arg165, and Asp174. Cysteines 153 and 167 form a disulfide. Arg202 serves as a coordination point for chloride. The Nucleophile role is filled by Asp204. Ca(2+) is bound at residue His208. Glu241 functions as the Proton donor in the catalytic mechanism. Residues Asn304 and Arg343 each coordinate chloride. A disordered region spans residues 350–370 (FTDTDQGPPTTDGQNIASPSF). A compositionally biased stretch (low complexity) spans 351-363 (TDTDQGPPTTDGQ). Cystine bridges form between Cys376/Cys382 and Cys448/Cys460.

Belongs to the glycosyl hydrolase 13 family. Monomer. Ca(2+) serves as cofactor. The cofactor is chloride.

The catalysed reaction is Endohydrolysis of (1-&gt;4)-alpha-D-glucosidic linkages in polysaccharides containing three or more (1-&gt;4)-alpha-linked D-glucose units.. The sequence is that of Alpha-amylase 2 (Amy58) from Drosophila ananassae (Fruit fly).